The chain runs to 239 residues: Lactate utilization protein A (239 aa).

It belongs to the LutA/YkgE family.

Its function is as follows. Is involved in L-lactate degradation and allows cells to grow with lactate as the sole carbon source. This is Lactate utilization protein A from Bacillus cytotoxicus (strain DSM 22905 / CIP 110041 / 391-98 / NVH 391-98).